Consider the following 221-residue polypeptide: Phosphoenolpyruvate guanylyltransferase (221 aa).

Phosphoenolpyruvate-binding residues include Thr-154, Gly-169, and Ser-172.

It belongs to the CofC family.

It catalyses the reaction phosphoenolpyruvate + GTP + H(+) = enolpyruvoyl-2-diphospho-5'-guanosine + diphosphate. The protein operates within cofactor biosynthesis; coenzyme F420 biosynthesis. Functionally, guanylyltransferase that catalyzes the activation of phosphoenolpyruvate (PEP) as enolpyruvoyl-2-diphospho-5'-guanosine, via the condensation of PEP with GTP. It is involved in the biosynthesis of coenzyme F420, a hydride carrier cofactor. In Mycolicibacterium smegmatis (strain ATCC 700084 / mc(2)155) (Mycobacterium smegmatis), this protein is Phosphoenolpyruvate guanylyltransferase.